The chain runs to 520 residues: MAGCTRKLTHLRKRIHRPRRRTTRRWKRWFKFRKRKGEKRPRPNHKAVARRAKLKFSTSEKLHWPEQELAKKSILNAEDSLIIDNKRSISHLSSGVLKDIFTTGTSSYNVLLQSKEEKKYHSQKQSSSTYSKRCRKPSKSPNTSRSKDPRRMKALVPVTSSGTWYCLERRPAVFVTSSVSSPVKFTHDISVTGNGIVLPPKPKSKVKWCHFSTLPKPKPQLSRSFEKGDDFSGKKFCILTAIKPTNLEKEKLRFFKSDYTYNPQFEYANPALPSVLAKHSHASDRFLKQIVVHLTEDLLSRASMTVVNGCPTLTINVSTAREHWLEGMLRHEIGTHYFRGINNLQQPWNSWTGRKKHELKPNNPTEEGLASIHSVLFRKDPFLWRAALLYYTVYQASQMSFCELFKDIGRFVKDPNTRWDYCVRAKRGWTDTSQPGCFSKDQVYLDGILQILRYRDTIDFHLLTALGKVSYEDVDRLKGLAVTENMRVPHFLQDHGRYMEHLEKIMEVNELTDRELKDLI.

The segment at 116–153 (EEKKYHSQKQSSSTYSKRCRKPSKSPNTSRSKDPRRMK) is disordered. Residue His331 participates in Zn(2+) binding. Catalysis depends on Glu332, which acts as the Nucleophile. Zn(2+)-binding residues include His336 and Glu367.

Requires Zn(2+) as cofactor.

Functionally, putative tyrosine carboxypeptidase. This chain is Putative tyrosine carboxypeptidase MATCAP2, found in Homo sapiens (Human).